A 166-amino-acid polypeptide reads, in one-letter code: 2-C-methyl-D-erythritol 2,4-cyclodiphosphate synthase (166 aa).

Positions 12 and 14 each coordinate a divalent metal cation. 4-CDP-2-C-methyl-D-erythritol 2-phosphate contacts are provided by residues 12–14 (DSH) and 38–39 (HS). H46 is a binding site for a divalent metal cation. 4-CDP-2-C-methyl-D-erythritol 2-phosphate contacts are provided by residues 60-62 (DIG), 65-69 (FPDTD), and R146.

The protein belongs to the IspF family. As to quaternary structure, homotrimer. A divalent metal cation is required as a cofactor.

It catalyses the reaction 4-CDP-2-C-methyl-D-erythritol 2-phosphate = 2-C-methyl-D-erythritol 2,4-cyclic diphosphate + CMP. The protein operates within isoprenoid biosynthesis; isopentenyl diphosphate biosynthesis via DXP pathway; isopentenyl diphosphate from 1-deoxy-D-xylulose 5-phosphate: step 4/6. Its function is as follows. Involved in the biosynthesis of isopentenyl diphosphate (IPP) and dimethylallyl diphosphate (DMAPP), two major building blocks of isoprenoid compounds. Catalyzes the conversion of 4-diphosphocytidyl-2-C-methyl-D-erythritol 2-phosphate (CDP-ME2P) to 2-C-methyl-D-erythritol 2,4-cyclodiphosphate (ME-CPP) with a corresponding release of cytidine 5-monophosphate (CMP). This Gemmatimonas aurantiaca (strain DSM 14586 / JCM 11422 / NBRC 100505 / T-27) protein is 2-C-methyl-D-erythritol 2,4-cyclodiphosphate synthase.